The primary structure comprises 273 residues: MHAASREALARVTSDLDKALWEAKENAIATAAHTGAELFDVVEVLDGDRALRVAVADSAKSAEDRAGLVSAVFAGKVSPATLEVLVTSARELWSNPREFRDGLVTLGRRALLRSAEGQGQLGQVEDELFRLSRILDKEPELTLLLDDRSTDGAKKRELLAKVLYGKVTAVTEALALQVIGRRESNAIDDIDALSKEAAALQGHSVAHVVSAGRLNDEQNQALAQKLERIYGRAMSIHSEVDPSLLGGLVIRVGDEVIDGSTSGKLERLRANLA.

It belongs to the ATPase delta chain family. In terms of assembly, F-type ATPases have 2 components, F(1) - the catalytic core - and F(0) - the membrane proton channel. F(1) has five subunits: alpha(3), beta(3), gamma(1), delta(1), epsilon(1). F(0) has three main subunits: a(1), b(2) and c(10-14). The alpha and beta chains form an alternating ring which encloses part of the gamma chain. F(1) is attached to F(0) by a central stalk formed by the gamma and epsilon chains, while a peripheral stalk is formed by the delta and b chains.

Its subcellular location is the cell membrane. In terms of biological role, f(1)F(0) ATP synthase produces ATP from ADP in the presence of a proton or sodium gradient. F-type ATPases consist of two structural domains, F(1) containing the extramembraneous catalytic core and F(0) containing the membrane proton channel, linked together by a central stalk and a peripheral stalk. During catalysis, ATP synthesis in the catalytic domain of F(1) is coupled via a rotary mechanism of the central stalk subunits to proton translocation. This protein is part of the stalk that links CF(0) to CF(1). It either transmits conformational changes from CF(0) to CF(1) or is implicated in proton conduction. The protein is ATP synthase subunit delta of Corynebacterium diphtheriae (strain ATCC 700971 / NCTC 13129 / Biotype gravis).